A 444-amino-acid polypeptide reads, in one-letter code: Methylenetetrahydrofolate--tRNA-(uracil-5-)-methyltransferase TrmFO (444 aa).

Residue 10-15 (GAGLAG) coordinates FAD.

This sequence belongs to the MnmG family. TrmFO subfamily. FAD is required as a cofactor.

The protein resides in the cytoplasm. It catalyses the reaction uridine(54) in tRNA + (6R)-5,10-methylene-5,6,7,8-tetrahydrofolate + NADH + H(+) = 5-methyluridine(54) in tRNA + (6S)-5,6,7,8-tetrahydrofolate + NAD(+). The enzyme catalyses uridine(54) in tRNA + (6R)-5,10-methylene-5,6,7,8-tetrahydrofolate + NADPH + H(+) = 5-methyluridine(54) in tRNA + (6S)-5,6,7,8-tetrahydrofolate + NADP(+). Functionally, catalyzes the folate-dependent formation of 5-methyl-uridine at position 54 (M-5-U54) in all tRNAs. The polypeptide is Methylenetetrahydrofolate--tRNA-(uracil-5-)-methyltransferase TrmFO (Streptococcus suis (strain 98HAH33)).